Here is a 192-residue protein sequence, read N- to C-terminus: uncharacterized protein (192 aa).

Belongs to the CAPAB/TerDEXZ family.

This is an uncharacterized protein from Bacillus subtilis (strain 168).